A 267-amino-acid chain; its full sequence is MFMQKFRAAATSNRSTLCIGLDPDLARLPEHLPRDAAGIVQFNQAIIEATSDLVCAYKPNMAFYEALGSAGWLALKQTIASIPSHIPVLLDAKRGDIGSTAQAYASAAFDELGVDAITLSPYMGYDSLQPFLERADKTCFILCRTSNPGGDDVQNLLLDNGEPLFLKIAELVAKRWNSNHNCGLVVGATYPAEIATIHQRYPELPLLVPGVGSQGGDIEEVLAAAGEQAIINVSRSVLYASGGSSFAEAARKVAQAFLVPKQALNHP.

The Proton donor role is filled by K93.

The protein belongs to the OMP decarboxylase family. Type 2 subfamily.

It catalyses the reaction orotidine 5'-phosphate + H(+) = UMP + CO2. Its pathway is pyrimidine metabolism; UMP biosynthesis via de novo pathway; UMP from orotate: step 2/2. In Herpetosiphon aurantiacus (strain ATCC 23779 / DSM 785 / 114-95), this protein is Orotidine 5'-phosphate decarboxylase.